The following is an 89-amino-acid chain: Small ribosomal subunit protein uS15 (89 aa).

The protein belongs to the universal ribosomal protein uS15 family. As to quaternary structure, part of the 30S ribosomal subunit. Forms a bridge to the 50S subunit in the 70S ribosome, contacting the 23S rRNA.

In terms of biological role, one of the primary rRNA binding proteins, it binds directly to 16S rRNA where it helps nucleate assembly of the platform of the 30S subunit by binding and bridging several RNA helices of the 16S rRNA. Functionally, forms an intersubunit bridge (bridge B4) with the 23S rRNA of the 50S subunit in the ribosome. In Cereibacter sphaeroides (strain ATCC 17023 / DSM 158 / JCM 6121 / CCUG 31486 / LMG 2827 / NBRC 12203 / NCIMB 8253 / ATH 2.4.1.) (Rhodobacter sphaeroides), this protein is Small ribosomal subunit protein uS15.